A 174-amino-acid polypeptide reads, in one-letter code: Terminase small subunit (174 aa).

This sequence belongs to the skunalikevirus terminase small subunit family.

Its function is as follows. Probable terminase small subunit. The terminase lies at a unique vertex of the procapsid and is composed of two subunits, a small terminase subunit and a large terminase subunit. Both terminase subunits heterooligomerize and are docked on the portal protein to form the packaging machine. Once the capsid is packaged with the DNA, the terminase complex is substituted by the connector proteins gp15. The chain is Terminase small subunit from Lactococcus lactis (Lactococcus lactis bacteriophage SK1).